Consider the following 424-residue polypeptide: Phosphomethylpyrimidine synthase (424 aa).

Residues asparagine 66, methionine 95, tyrosine 124, histidine 163, 185–187 (SRG), 226–229 (DGMR), and glutamate 265 each bind substrate. Histidine 269 lines the Zn(2+) pocket. Phenylalanine 292 lines the substrate pocket. Histidine 333 serves as a coordination point for Zn(2+). Residues cysteine 408, cysteine 411, and cysteine 415 each coordinate [4Fe-4S] cluster.

This sequence belongs to the ThiC family. Requires [4Fe-4S] cluster as cofactor.

It catalyses the reaction 5-amino-1-(5-phospho-beta-D-ribosyl)imidazole + S-adenosyl-L-methionine = 4-amino-2-methyl-5-(phosphooxymethyl)pyrimidine + CO + 5'-deoxyadenosine + formate + L-methionine + 3 H(+). The protein operates within cofactor biosynthesis; thiamine diphosphate biosynthesis. Functionally, catalyzes the synthesis of the hydroxymethylpyrimidine phosphate (HMP-P) moiety of thiamine from aminoimidazole ribotide (AIR) in a radical S-adenosyl-L-methionine (SAM)-dependent reaction. This chain is Phosphomethylpyrimidine synthase, found in Thermotoga sp. (strain RQ2).